Here is a 198-residue protein sequence, read N- to C-terminus: Recombination protein RecR (198 aa).

A C4-type zinc finger spans residues 57–72; the sequence is CRQCRTLSEEELCPQC. Residues 80-174 enclose the Toprim domain; that stretch reads SLLCVVEGPL…TLSRIAHGVP (95 aa).

It belongs to the RecR family.

May play a role in DNA repair. It seems to be involved in an RecBC-independent recombinational process of DNA repair. It may act with RecF and RecO. The sequence is that of Recombination protein RecR from Pseudomonas aeruginosa (strain LESB58).